Reading from the N-terminus, the 549-residue chain is T-complex protein 1 subunit theta (549 aa).

This sequence belongs to the TCP-1 chaperonin family. As to quaternary structure, heterooligomeric complex of about 850 to 900 kDa that forms two stacked rings, 12 to 16 nm in diameter. Interacts with CCT3, KNAT1, STM and TTG1. In terms of tissue distribution, expressed in shoot meristems, root tip, vasculature and leaf epidermis.

It is found in the cytoplasm. Molecular chaperone; assists the folding of proteins upon ATP hydrolysis. Known to play a role, in vitro, in the folding of actin and tubulin. Contributes to stem cell maintenance through its impact on transcription factors trafficking through plasmodesmata. Probably involved in refolding translocated, partially unfolded proteins, including viral movement proteins. This Arabidopsis thaliana (Mouse-ear cress) protein is T-complex protein 1 subunit theta.